Consider the following 192-residue polypeptide: MSRTKKTRRITDIMPARKADKKPEQPKLSGGKNRKSTRYELDAKAREEKKKRKHKGLPTGSRNVDPAEQKKAAVKEVKDPRIGSRKKIPLMVEFVNKPEKGQIIKPVAMEEYKPHLSPELELEQLENNEILNQLLDEIEAGKTLSAKDQKFVDECLDRIDELMTELGIQDEDEDNGDALLRQFETMDINQFR.

The disordered stretch occupies residues 1–80; it reads MSRTKKTRRI…KAAVKEVKDP (80 aa). Composition is skewed to basic and acidic residues over residues 9 to 25, 37 to 48, and 65 to 80; these read RITDIMPARKADKKPEQ, TRYELDAKAREE, and DPAEQKKAAVKEVKDP.

Belongs to the YihI family. In terms of assembly, interacts with Der.

In terms of biological role, a GTPase-activating protein (GAP) that modifies Der/EngA GTPase function. May play a role in ribosome biogenesis. The sequence is that of Der GTPase-activating protein YihI from Actinobacillus pleuropneumoniae serotype 5b (strain L20).